Here is a 216-residue protein sequence, read N- to C-terminus: Ion-translocating oxidoreductase complex subunit G (216 aa).

A helical transmembrane segment spans residues Ala-14 to Ile-34. Thr-181 bears the FMN phosphoryl threonine mark.

Belongs to the RnfG family. The complex is composed of six subunits: RnfA, RnfB, RnfC, RnfD, RnfE and RnfG. FMN serves as cofactor.

It localises to the cell inner membrane. Part of a membrane-bound complex that couples electron transfer with translocation of ions across the membrane. The polypeptide is Ion-translocating oxidoreductase complex subunit G (Buchnera aphidicola subsp. Baizongia pistaciae (strain Bp)).